The sequence spans 300 residues: N-acetylmuramic acid 6-phosphate etherase (300 aa).

Positions 57 to 220 constitute an SIS domain; that stretch reads VAAALRAGGR…STGAMIRIGK (164 aa). Glu-85 serves as the catalytic Proton donor. Residue Glu-116 is part of the active site.

The protein belongs to the GCKR-like family. MurNAc-6-P etherase subfamily. In terms of assembly, homodimer.

The catalysed reaction is N-acetyl-D-muramate 6-phosphate + H2O = N-acetyl-D-glucosamine 6-phosphate + (R)-lactate. It functions in the pathway amino-sugar metabolism; 1,6-anhydro-N-acetylmuramate degradation. The protein operates within amino-sugar metabolism; N-acetylmuramate degradation. Its pathway is cell wall biogenesis; peptidoglycan recycling. Its function is as follows. Specifically catalyzes the cleavage of the D-lactyl ether substituent of MurNAc 6-phosphate, producing GlcNAc 6-phosphate and D-lactate. Together with AnmK, is also required for the utilization of anhydro-N-acetylmuramic acid (anhMurNAc) either imported from the medium or derived from its own cell wall murein, and thus plays a role in cell wall recycling. This chain is N-acetylmuramic acid 6-phosphate etherase, found in Klebsiella aerogenes (Enterobacter aerogenes).